A 658-amino-acid polypeptide reads, in one-letter code: Non-reducing end beta-L-arabinofuranosidase (658 aa).

Residues histidine 142, 192–194, histidine 270, and glutamate 322 contribute to the beta-L-arabinofuranose site; that span reads DGH. Glutamate 322 acts as the Proton donor/acceptor in catalysis. Residues glutamate 338, cysteine 340, cysteine 417, and cysteine 418 each coordinate Zn(2+). The Nucleophile; S-glycosyl-cysteine intermediate role is filled by cysteine 417.

Belongs to the glycosyl hydrolase 127 family. As to quaternary structure, homodimer in solution. Zn(2+) serves as cofactor.

The enzyme catalyses beta-L-arabinofuranosyl-(1-&gt;2)-beta-L-arabinofuranose + H2O = 2 beta-L-arabinofuranose. Its activity is regulated as follows. Strongly inhibited in the presence of thiol modifiers, suggesting a crucial role for cysteine residues in catalysis. Slightly inhibited by EDTA. Its function is as follows. Beta-L-arabinofuranosidase that removes the beta-L-arabinofuranose residue from the non-reducing end of various substrates, including beta-L-arabinofuranosyl-hydroxyproline (Ara-Hyp), Ara-beta-1,2-Ara-beta-Hyp (Ara(2)-Hyp), Ara-beta-1,2-Ara-beta-1,2-Ara-beta-Hyp (Ara(3)-Hyp), and beta-L-arabinofuranosyl-(1-&gt;2)-1-O-methyl-beta-L-arabinofuranose. In the presence of 1-alkanols, shows transglycosylation activity, retaining the anomeric configuration of the arabinofuranose residue. The polypeptide is Non-reducing end beta-L-arabinofuranosidase (Bifidobacterium longum subsp. longum (strain ATCC 15707 / DSM 20219 / JCM 1217 / NCTC 11818 / E194b)).